A 91-amino-acid polypeptide reads, in one-letter code: Small ribosomal subunit protein uS19 (91 aa).

It belongs to the universal ribosomal protein uS19 family.

Its function is as follows. Protein S19 forms a complex with S13 that binds strongly to the 16S ribosomal RNA. The chain is Small ribosomal subunit protein uS19 from Amoebophilus asiaticus (strain 5a2).